The sequence spans 1221 residues: DNA replication helicase (1221 aa).

The Nuclear localization signal signature appears at 692–701 (PKCKCYKKIK). 917 to 924 (GEPGSGKS) contacts ATP. The segment at residues 967-981 (INELKQCSESYFKKH) is a DNA-binding region (H-T-H motif).

In terms of assembly, interacts with IE1 and LEF-3.

The protein localises to the host nucleus. The enzyme catalyses ATP + H2O = ADP + phosphate + H(+). Functionally, essential for initiation of viral DNA replication, it may contribute to other functions such as controlling the switch to the late phase and leading to the inhibition of host protein synthesis. Required for late and very late gene expression. The polypeptide is DNA replication helicase (HELI) (Lepidoptera (butterflies and moths)).